The primary structure comprises 174 residues: tRNA (cytidine(56)-2'-O)-methyltransferase (174 aa).

Residues Leu80, Gly105–Val109, and Ile123–Glu130 each bind S-adenosyl-L-methionine.

The protein belongs to the aTrm56 family. In terms of assembly, homodimer.

The protein localises to the cytoplasm. It carries out the reaction cytidine(56) in tRNA + S-adenosyl-L-methionine = 2'-O-methylcytidine(56) in tRNA + S-adenosyl-L-homocysteine + H(+). Functionally, specifically catalyzes the AdoMet-dependent 2'-O-ribose methylation of cytidine at position 56 in tRNAs. The chain is tRNA (cytidine(56)-2'-O)-methyltransferase from Metallosphaera sedula (strain ATCC 51363 / DSM 5348 / JCM 9185 / NBRC 15509 / TH2).